A 208-amino-acid chain; its full sequence is Urease accessory protein UreG 2 (208 aa).

16–23 serves as a coordination point for GTP; the sequence is GPVGSGKT.

The protein belongs to the SIMIBI class G3E GTPase family. UreG subfamily. In terms of assembly, homodimer. UreD, UreF and UreG form a complex that acts as a GTP-hydrolysis-dependent molecular chaperone, activating the urease apoprotein by helping to assemble the nickel containing metallocenter of UreC. The UreE protein probably delivers the nickel.

Its subcellular location is the cytoplasm. Facilitates the functional incorporation of the urease nickel metallocenter. This process requires GTP hydrolysis, probably effectuated by UreG. The sequence is that of Urease accessory protein UreG 2 from Methylobacterium radiotolerans (strain ATCC 27329 / DSM 1819 / JCM 2831 / NBRC 15690 / NCIMB 10815 / 0-1).